The primary structure comprises 149 residues: Cyanate hydratase (149 aa).

Catalysis depends on residues arginine 90, glutamate 93, and serine 116.

This sequence belongs to the cyanase family.

The enzyme catalyses cyanate + hydrogencarbonate + 3 H(+) = NH4(+) + 2 CO2. Functionally, catalyzes the reaction of cyanate with bicarbonate to produce ammonia and carbon dioxide. The polypeptide is Cyanate hydratase (Synechocystis sp. (strain ATCC 27184 / PCC 6803 / Kazusa)).